A 500-amino-acid chain; its full sequence is MTIFDNYEVWFVIGSQHLYGAETLRQVTQHAEHVVNALNTEAKLPCKLVLKPLGTSPDEITAICRDANYDDRCAGLVVWLHTFSPAKMWINGLSILNKPLLQFHTQFNAALPWDSIDMDFMNLNQTAHGGREFGFIGARMRQQHAVVTGHWQDKEAHTRIGAWMRQAVSKQDTRQLKVCRFGDNMREVAVTDGDKVAAQIKFGFSVNTWAVGDLVQVVNSIGDGDISALIDEYESSYTLTPATQIHGDKRQNVREAARIELGMKRFLEQGGFHAFTTTFEDLHGLKQLPGLAVQRLMQQGYGFAGEGDWKTAALLRIMKVMSTGLQGGTSFMEDYTDHFEKGNDLVLGSHMLEVCPSIAVEEKPILDVQHLGIGGKEDPARLIFNTQTGPAIVASLIDLGDRYRLLVNCIDTVKTPHSLPKLPVANALWKAQPDLPTASEAWILAGGAHHTVFSHALDLNDMRQFAEIHDIEIAVIDNDTRLPAFKDALRWNEVYYGLKR.

The Mn(2+) site is built by Glu-306, Glu-333, His-350, and His-450.

Belongs to the arabinose isomerase family. Homohexamer. Requires Mn(2+) as cofactor.

It catalyses the reaction beta-L-arabinopyranose = L-ribulose. Its pathway is carbohydrate degradation; L-arabinose degradation via L-ribulose; D-xylulose 5-phosphate from L-arabinose (bacterial route): step 1/3. Catalyzes the conversion of L-arabinose to L-ribulose. This Salmonella typhi protein is L-arabinose isomerase.